The following is a 615-amino-acid chain: 3-(3-hydroxy-phenyl)propionate/3-hydroxycinnamic acid hydroxylase 1 (615 aa).

The disordered stretch occupies residues 1-20 (MRPAFEPAAGLGRAHPHETT). Residues 27–56 (DVAIIGAGPVGLMIANILGLQGVRVVVVEK) and 294–304 (FRVKRILLAGD) each bind FAD.

The protein belongs to the PheA/TfdB FAD monooxygenase family. It depends on FAD as a cofactor.

The enzyme catalyses 3-(3-hydroxyphenyl)propanoate + NADH + O2 + H(+) = 3-(2,3-dihydroxyphenyl)propanoate + NAD(+) + H2O. The catalysed reaction is (2E)-3-(3-hydroxyphenyl)prop-2-enoate + NADH + O2 + H(+) = (2E)-3-(2,3-dihydroxyphenyl)prop-2-enoate + NAD(+) + H2O. It participates in aromatic compound metabolism; 3-phenylpropanoate degradation. Catalyzes the insertion of one atom of molecular oxygen into position 2 of the phenyl ring of 3-(3-hydroxyphenyl)propionate (3-HPP) and hydroxycinnamic acid (3HCI). This is 3-(3-hydroxy-phenyl)propionate/3-hydroxycinnamic acid hydroxylase 1 from Burkholderia vietnamiensis (strain G4 / LMG 22486) (Burkholderia cepacia (strain R1808)).